Consider the following 104-residue polypeptide: Large ribosomal subunit protein uL24 (104 aa).

This sequence belongs to the universal ribosomal protein uL24 family. Part of the 50S ribosomal subunit.

One of two assembly initiator proteins, it binds directly to the 5'-end of the 23S rRNA, where it nucleates assembly of the 50S subunit. In terms of biological role, one of the proteins that surrounds the polypeptide exit tunnel on the outside of the subunit. This chain is Large ribosomal subunit protein uL24, found in Caulobacter sp. (strain K31).